The sequence spans 180 residues: Interleukin-17B (180 aa).

An N-terminal signal peptide occupies residues 1 to 22 (MDWPHSLLFLLAISIFLAPSHP). A disordered region spans residues 22-44 (PRNTKGKRKGQGRPSPLAPGPHQ). Over residues 23-32 (RNTKGKRKGQ) the composition is skewed to basic residues. N-linked (GlcNAc...) asparagine glycosylation is present at asparagine 75. 2 disulfide bridges follow: cysteine 121–cysteine 176 and cysteine 126–cysteine 178.

Belongs to the IL-17 family.

It is found in the secreted. Stimulates the release of tumor necrosis factor alpha and IL-1-beta from the monocytic cell line THP-1. This Mus musculus (Mouse) protein is Interleukin-17B (Il17b).